Consider the following 239-residue polypeptide: Phosducin-like protein 3 (239 aa).

The segment at 16-37 (KKGILPPKETPVEEEEDEQLHL) is disordered. The Phosducin domain maps to 28-201 (EEEEDEQLHL…LEWRLSESGA (174 aa)). At Ser41 the chain carries Phosphoserine. Residues 89–239 (FGELKEISGQ…RDGEEDSDED (151 aa)) are thioredoxin fold. The segment covering 217–227 (QLMTSIRCSAN) has biased composition (polar residues). The tract at residues 217 to 239 (QLMTSIRCSANTHRDGEEDSDED) is disordered.

The protein belongs to the phosducin family. In terms of assembly, interacts (via thioredoxin fold region) with kdr/vegfr2 (via juxtamembrane domain). In terms of tissue distribution, expressed in endothelial cells.

The protein localises to the cytoplasm. The protein resides in the perinuclear region. It localises to the endoplasmic reticulum. In terms of biological role, acts as a chaperone for the angiogenic VEGF receptor KDR/VEGFR2, increasing its abundance by inhibiting its ubiquitination and degradation. Inhibits the folding activity of the chaperonin-containing T-complex (CCT) which leads to inhibition of cytoskeletal actin folding. Acts as a chaperone during heat shock alongside HSP90 and HSP40/70 chaperone complexes. Modulates the activation of caspases during apoptosis. This is Phosducin-like protein 3 from Danio rerio (Zebrafish).